The chain runs to 215 residues: UPF0502 protein YceH (215 aa).

Residue K80 is modified to N6-acetyllysine.

It belongs to the UPF0502 family.

In Escherichia coli O45:K1 (strain S88 / ExPEC), this protein is UPF0502 protein YceH.